We begin with the raw amino-acid sequence, 454 residues long: Aspartate aminotransferase P2, mitochondrial (454 aa).

The N-terminal 49 residues, 1-49 (SSLLSIPSLSLQYNDKLKVGGNSLRFSKEQSNTFSNAKSSCRISMVAAV), are a transit peptide targeting the mitochondrion. 3 residues coordinate L-aspartate: glycine 86, tryptophan 182, and asparagine 235. An N6-(pyridoxal phosphate)lysine modification is found at lysine 299. An L-aspartate-binding site is contributed by arginine 428.

The protein belongs to the class-I pyridoxal-phosphate-dependent aminotransferase family. In terms of assembly, homodimer. Requires pyridoxal 5'-phosphate as cofactor.

It is found in the mitochondrion matrix. It carries out the reaction L-aspartate + 2-oxoglutarate = oxaloacetate + L-glutamate. Functionally, important for the metabolism of amino acids and Krebs-cycle related organic acids. In plants, it is involved in nitrogen metabolism and in aspects of carbon and energy metabolism. This Lupinus angustifolius (Narrow-leaved blue lupine) protein is Aspartate aminotransferase P2, mitochondrial.